The primary structure comprises 104 residues: Replication restart protein PriB (104 aa).

The 101-residue stretch at 1 to 101 (MTNRLELSGI…LHAEQIELID (101 aa)) folds into the SSB domain.

Belongs to the PriB family. As to quaternary structure, homodimer. Interacts with DnaT. Interacts with PriA. Component of the replication restart primosome. Primosome assembly occurs via a 'hand-off' mechanism. PriA binds to replication forks, subsequently PriB then DnaT bind; DnaT then displaces ssDNA to generate the helicase loading substrate.

In terms of biological role, involved in the restart of stalled replication forks, which reloads the replicative helicase on sites far from the origin of replication; the PriA-PriB pathway is the major replication restart pathway. During primosome assembly it facilitates complex formation between PriA and DnaT on DNA; stabilizes PriA on DNA. Stimulates the DNA unwinding activity of PriA helicase. Functionally, binds single-stranded (ss)DNA at the primosome assembly site (PAS). One study finds it binds 15 nucleotide (nt) ssDNA. Another study finds the minimal ssDNA length for binding to PriB is 25 nt; prefers dT(30) over dA(30). Also binds 22 nt dsDNA. The chain is Replication restart protein PriB from Klebsiella pneumoniae subsp. pneumoniae (strain ATCC 700721 / MGH 78578).